A 197-amino-acid polypeptide reads, in one-letter code: Penicillin-binding protein activator LpoB (197 aa).

The first 17 residues, 1–17 (MIKRMSGIALAALLLSG), serve as a signal peptide directing secretion. A lipid anchor (N-palmitoyl cysteine) is attached at C18. A lipid anchor (S-diacylglycerol cysteine) is attached at C18. Residues 23-57 (PRGETPSQPPAPTTPAKPSVVPTPTPPVVTPVPQP) are disordered. Residues 29–57 (SQPPAPTTPAKPSVVPTPTPPVVTPVPQP) are compositionally biased toward pro residues.

Belongs to the LpoB family. As to quaternary structure, interacts with PBP1b.

It is found in the cell outer membrane. Its function is as follows. Regulator of peptidoglycan synthesis that is essential for the function of penicillin-binding protein 1B (PBP1b). The polypeptide is Penicillin-binding protein activator LpoB (Edwardsiella piscicida).